Consider the following 151-residue polypeptide: Natriuretic peptides A (151 aa).

A signal peptide spans 1-25 (MSSFSTTTVSFLLLLAFQLLGQTRA). The segment at 62-105 (VLSEPNEEAGAALSPLPEVPPWTGEVSPAQRDGGALGRGPWDSS) is disordered. Residues 93–103 (DGGALGRGPWD) constitute a propeptide that is removed on maturation. Residue Ser129 is modified to Phosphoserine. A disulfide bridge connects residues Cys130 and Cys146. The important for degradation of atrial natriuretic peptide by IDE stretch occupies residues 147–151 (NSFRY).

It belongs to the natriuretic peptide family. As to quaternary structure, homodimer; disulfide-linked antiparallel dimer. In terms of processing, the precursor molecule is proteolytically cleaved by CORIN at Arg-123 to produce atrial natriuretic peptide. Undergoes further proteolytic cleavage by unknown proteases to give rise to long-acting natriuretic peptide, vessel dilator and kaliuretic peptide. Additional processing gives rise to the auriculin and atriopeptin peptides. In the kidneys, alternative processing by an unknown protease results in the peptide urodilatin. Cleavage by MME initiates degradation of the factor and thereby regulates its activity. Degraded by IDE (in vitro). During IDE degradation, the resulting products can temporarily stimulate NPR2 to produce cGMP, before the fragments are completely degraded and inactivated by IDE (in vitro). Post-translationally, degraded by IDE. In terms of processing, phosphorylation on Ser-129 decreases vasorelaxant activity. Detected in the kidney distal tubular cells (at protein level). Present in urine (at protein level). In terms of tissue distribution, detected in atrial and ventricular plasma samples, and in adipocytes (at protein level). Detected in urine in one study. However, was not detected in urine in another study. In the brain, predominantly expressed in the gray matter with very weak expression in the white matter (at protein level). Localizes to astrocyte-like structures throughout the white matter, and in the cerebral vessels detected in the leptomeningeal and parenchymal vessels, and endothelium and smooth muscle layers (at protein level). Relatively low levels of expression in the kidneys compared to urodilatin (at protein level).

It localises to the secreted. The protein localises to the perikaryon. The protein resides in the cell projection. Its function is as follows. Hormone that plays a key role in mediating cardio-renal homeostasis, and is involved in vascular remodeling and regulating energy metabolism. Acts by specifically binding and stimulating NPR1 to produce cGMP, which in turn activates effector proteins, such as PRKG1, that drive various biological responses. Regulates vasodilation, natriuresis, diuresis and aldosterone synthesis and is therefore essential for regulating blood pressure, controlling the extracellular fluid volume and maintaining the fluid-electrolyte balance. Also involved in inhibiting cardiac remodeling and cardiac hypertrophy by inducing cardiomyocyte apoptosis and attenuating the growth of cardiomyocytes and fibroblasts. Plays a role in female pregnancy by promoting trophoblast invasion and spiral artery remodeling in uterus, and thus prevents pregnancy-induced hypertension. In adipose tissue, acts in various cGMP- and PKG-dependent pathways to regulate lipid metabolism and energy homeostasis. This includes up-regulating lipid metabolism and mitochondrial oxygen utilization by activating the AMP-activated protein kinase (AMPK), and increasing energy expenditure by acting via MAPK11 to promote the UCP1-dependent thermogenesis of brown adipose tissue. Binds the clearance receptor NPR3 which removes the hormone from circulation. Functionally, may have a role in cardio-renal homeostasis through regulation of natriuresis, diuresis, vasodilation, and inhibiting aldosterone synthesis. In vitro, promotes the production of cGMP and induces vasodilation. May promote natriuresis, at least in part, by enhancing prostaglandin E2 synthesis resulting in the inhibition of renal Na+-K+-ATPase. However reports on the involvement of this peptide in mammal blood volume and blood pressure homeostasis are conflicting; according to a report, in vivo it is not sufficient to activate cGMP and does not inhibit collecting duct transport nor effect diuresis and natriuresis. Appears to bind to specific receptors that are distinct from the receptors bound by atrial natriuretic peptide and vessel dilator. Possibly enhances protein excretion in urine by decreasing proximal tubular protein reabsorption. In terms of biological role, may have a role in cardio-renal homeostasis through regulation of natriuresis, diuresis, and vasodilation. In vitro, promotes the production of cGMP and induces vasodilation. May promote natriuresis, at least in part, by enhancing prostaglandin E2 synthesis resulting in the inhibition of renal Na+-K+-ATPase. However reports on the involvement of this peptide in mammal blood volume and blood pressure homeostasis are conflicting; according to a report it is not sufficient to activate cGMP and does not inhibit collecting duct transport nor effect diuresis and natriuresis. Appears to bind to specific receptors that are distinct from the receptors bound by the atrial natriuretic and long-acting natriuretic peptides. Possibly functions in protein excretion in urine by maintaining the integrity of the proximal tubules and enhancing protein excretion by decreasing proximal tubular protein reabsorption. May have a role in cardio-renal homeostasis through regulation of diuresis and inhibiting aldosterone synthesis. In vitro, promotes the production of cGMP and induces vasodilation. May promote natriuresis, at least in part, by enhancing prostaglandin E2 synthesis resulting in the inhibition of renal Na+-K+-ATPase. May have a role in potassium excretion but not sodium excretion (natriuresis). Possibly enhances protein excretion in urine by decreasing proximal tubular protein reabsorption. Its function is as follows. Hormone produced in the kidneys that appears to be important for maintaining cardio-renal homeostasis. Mediates vasodilation, natriuresis and diuresis primarily in the renal system, in order to maintain the extracellular fluid volume and control the fluid-electrolyte balance. Specifically binds and stimulates cGMP production by renal transmembrane receptors, likely NPR1. Urodilatin not ANP, may be the natriuretic peptide responsible for the regulation of sodium and water homeostasis in the kidney. Functionally, may have a role in cardio-renal homeostasis through regulation of natriuresis and vasodilation. In vivo promotes natriuresis and in vitro, vasodilates renal artery strips. In terms of biological role, may have a role in cardio-renal homeostasis through regulation of regulation of natriuresis and vasodilation. In vivo promotes natriuresis. In vitro, vasodilates intestinal smooth muscle but not smooth muscle strips. May have a role in cardio-renal homeostasis through regulation of natriuresis and vasodilation. In vivo promotes natriuresis. In vitro, selectively vasodilates intestinal and vascular smooth muscle strips. Its function is as follows. May have a role in cardio-renal homeostasis through regulation of natriuresis and vasodilation. In vivo promotes natriuresis. In vitro, selectively vasodilates intestinal smooth muscle but not vascular smooth muscle strips. This is Natriuretic peptides A (NPPA) from Homo sapiens (Human).